The primary structure comprises 62 residues: MVTILQLLVSILILLSFALVVGVPVILVSPGEWERSKNLVYASAGLWFGLVIVTAAFNSFVI.

2 consecutive transmembrane segments (helical) span residues 8 to 28 (LVSILILLSFALVVGVPVILV) and 41 to 61 (YASAGLWFGLVIVTAAFNSFV).

This sequence belongs to the PsbZ family. In terms of assembly, PSII is composed of 1 copy each of membrane proteins PsbA, PsbB, PsbC, PsbD, PsbE, PsbF, PsbH, PsbI, PsbJ, PsbK, PsbL, PsbM, PsbT, PsbX, PsbY, PsbZ, Psb30/Ycf12, at least 3 peripheral proteins of the oxygen-evolving complex and a large number of cofactors. It forms dimeric complexes.

The protein resides in the plastid. It localises to the chloroplast thylakoid membrane. Its function is as follows. May control the interaction of photosystem II (PSII) cores with the light-harvesting antenna, regulates electron flow through the 2 photosystem reaction centers. PSII is a light-driven water plastoquinone oxidoreductase, using light energy to abstract electrons from H(2)O, generating a proton gradient subsequently used for ATP formation. The sequence is that of Photosystem II reaction center protein Z from Guillardia theta (Cryptophyte).